The sequence spans 1785 residues: BCL-6 corepressor-like protein 1 (1785 aa).

Disordered stretches follow at residues 65–101, 113–137, and 343–368; these read VGSG…KMDY, VPLS…NSRA, and ASTP…GPPS. Basic and acidic residues predominate over residues 83–97; it reads KLGHKSEDKPDDPQP. Serine 496 is modified (phosphoserine). 2 stretches are compositionally biased toward polar residues: residues 527-539 and 586-600; these read PCTS…TTQP and GTEQ…TFSP. Disordered regions lie at residues 527 to 550 and 562 to 646; these read PCTS…PLAD and PTPQ…PMPV. Phosphoserine occurs at positions 599 and 613. A Glycyl lysine isopeptide (Lys-Gly) (interchain with G-Cter in SUMO2) cross-link involves residue lysine 747. Disordered regions lie at residues 753 to 781, 876 to 901, and 937 to 977; these read IIDQ…QPST, SSSE…EQDP, and VQPS…LKLA. Phosphoserine occurs at positions 1029 and 1033. A Glycyl lysine isopeptide (Lys-Gly) (interchain with G-Cter in SUMO2) cross-link involves residue lysine 1092. Disordered regions lie at residues 1107-1293 and 1312-1487; these read PDDV…QGRR and WDTN…PEAR. Position 1162 is a phosphoserine (serine 1162). Positions 1176 to 1185 are enriched in basic residues; it reads VRGKHKHRKP. Over residues 1195–1213 the composition is skewed to basic and acidic residues; the sequence is KRADSHEEGSLEKKAKSSF. The span at 1222–1234 shows a compositional bias: polar residues; it reads STRTRSQSGSICS. Positions 1271–1284 are enriched in basic and acidic residues; it reads TQRDTQYRSHHAQD. Over residues 1314–1324 the composition is skewed to acidic residues; it reads TNEEEEEEEEE. The Nuclear localization signal signature appears at 1328–1336; it reads KRKKRRRQK. Basic residues predominate over residues 1328–1339; the sequence is KRKKRRRQKSRK. Residues 1352–1363 are compositionally biased toward basic and acidic residues; that stretch reads EQRRKGRADLKA. Polar residues predominate over residues 1440 to 1449; the sequence is WSQQKTRSPK. Residues 1461-1480 show a composition bias toward low complexity; sequence TPSKSRSASSEEASESPTAR. Serine 1476 bears the Phosphoserine mark. 3 ANK repeats span residues 1529 to 1558, 1562 to 1591, and 1595 to 1623; these read AGYT…NVNC, DGTR…DPTL, and SGQT…QGRA. A PCGF Ub-like fold domain (PUFD); required for the interaction with the KDM2B-SKP1 heterodimeric complex region spans residues 1668–1785; sequence DDFMFELSDK…SEVEFQSCNS (118 aa).

Belongs to the BCOR family. Interacts with PCGF1, forming heterodimers. The PCGF1-BCORL1 heterodimeric complex interacts with the KDM2B-SKP1 heterodimeric complex to form a homotetrameric polycomb repression complex 1 (PRC1.1). Interacts with SKP1. Interacts with CTBP1, HDAC4, HDAC5 and HDAC7. Detected in testis and prostate. Detected at lower levels in peripheral blood leukocytes and spleen. Mainly expressed in the spermatogonia and primary spermatocytes.

It localises to the nucleus. Its function is as follows. Transcriptional corepressor. May specifically inhibit gene expression when recruited to promoter regions by sequence-specific DNA-binding proteins such as BCL6. This repression may be mediated at least in part by histone deacetylase activities which can associate with this corepressor. This chain is BCL-6 corepressor-like protein 1, found in Homo sapiens (Human).